A 66-amino-acid chain; its full sequence is SGKGKGEKCTSACRSEPCQCGSKCQCGEGCTCAACKTCNCTSDGCKCGKECTGPDSCKCGSSCSCK.

Ser1 carries the post-translational modification N-acetylserine. Cd(2+) contacts are provided by Cys9, Cys13, Cys18, Cys20, Cys24, Cys26, Cys30, Cys32, Cys35, Cys38, Cys40, Cys45, Cys47, Cys51, Cys57, Cys59, Cys63, and Cys65.

Belongs to the metallothionein superfamily. Type 2 family.

Its function is as follows. The metallothioneins are involved in the cellular sequestration of toxic metal ions and regulation of essential trace elements. Binds almost exclusively cadmium. The protein is Cadmium-metallothionein of Helix pomatia (Roman snail).